A 221-amino-acid chain; its full sequence is UPF0502 protein PA14_19450 (221 aa).

It belongs to the UPF0502 family.

This Pseudomonas aeruginosa (strain UCBPP-PA14) protein is UPF0502 protein PA14_19450.